The following is an 83-amino-acid chain: Putative beta-neurotoxin RjAa17f (83 aa).

Residues 1–18 (MKILIFIIASFMLIGVEC) form the signal peptide. The LCN-type CS-alpha/beta domain maps to 19–82 (KEGYPMGRNG…VWDFSNIKCR (64 aa)). 4 disulfide bridges follow: Cys29-Cys81, Cys33-Cys55, Cys40-Cys62, and Cys44-Cys64.

It belongs to the long (4 C-C) scorpion toxin superfamily. Sodium channel inhibitor family. Beta subfamily. In terms of tissue distribution, expressed by the venom gland.

It localises to the secreted. Functionally, beta toxins bind voltage-independently at site-4 of sodium channels (Nav) and shift the voltage of activation toward more negative potentials thereby affecting sodium channel activation and promoting spontaneous and repetitive firing. This Rhopalurus junceus (Caribbean blue scorpion) protein is Putative beta-neurotoxin RjAa17f.